A 699-amino-acid chain; its full sequence is Elongation factor G (699 aa).

The 276-residue stretch at 8 to 283 (EHIRNIGICA…AVVDFLPSPI (276 aa)) folds into the tr-type G domain. Residues 17 to 24 (AHIDAGKT), 81 to 85 (DTPGH), and 135 to 138 (NKMD) contribute to the GTP site.

This sequence belongs to the TRAFAC class translation factor GTPase superfamily. Classic translation factor GTPase family. EF-G/EF-2 subfamily.

Its subcellular location is the cytoplasm. Catalyzes the GTP-dependent ribosomal translocation step during translation elongation. During this step, the ribosome changes from the pre-translocational (PRE) to the post-translocational (POST) state as the newly formed A-site-bound peptidyl-tRNA and P-site-bound deacylated tRNA move to the P and E sites, respectively. Catalyzes the coordinated movement of the two tRNA molecules, the mRNA and conformational changes in the ribosome. This chain is Elongation factor G, found in Rickettsia peacockii (strain Rustic).